A 316-amino-acid polypeptide reads, in one-letter code: MSEQFQHVSVLLHESIDGLAIKPDGIYIDGTFGRGGHSRQILSQLGENGRLYSIDRDPQAIAEAKTITDPKFTIIHGPFSGLKQYVEELELVGKIDGVLLDLGVSSPQLDDAERGFSFMKDGPLDMRMDPTSGIPVSQWLQEADVEDITWVIREFGEDKHAWRIAKGIVAYRENEENEPLTRTSQLAKLISEVAPKSFKEKKHPATRAFQAFRIYINSELDEIDTALKGALDVLAPEGRLSVISFHSLEDRMVKHFIRKESKGPQVPHGLPLTEEQIKALGSAKMKPVGKAIKPTKNEVDVNVRSRSSVLRIAERL.

S-adenosyl-L-methionine is bound by residues 35 to 37 (GGH), D55, F79, D101, and Q108.

It belongs to the methyltransferase superfamily. RsmH family.

It is found in the cytoplasm. It carries out the reaction cytidine(1402) in 16S rRNA + S-adenosyl-L-methionine = N(4)-methylcytidine(1402) in 16S rRNA + S-adenosyl-L-homocysteine + H(+). Specifically methylates the N4 position of cytidine in position 1402 (C1402) of 16S rRNA. In Aliivibrio fischeri (strain MJ11) (Vibrio fischeri), this protein is Ribosomal RNA small subunit methyltransferase H.